A 369-amino-acid chain; its full sequence is Cobalt-precorrin-5B C(1)-methyltransferase (369 aa).

This sequence belongs to the CbiD family.

The enzyme catalyses Co-precorrin-5B + S-adenosyl-L-methionine = Co-precorrin-6A + S-adenosyl-L-homocysteine. It participates in cofactor biosynthesis; adenosylcobalamin biosynthesis; cob(II)yrinate a,c-diamide from sirohydrochlorin (anaerobic route): step 6/10. Its function is as follows. Catalyzes the methylation of C-1 in cobalt-precorrin-5B to form cobalt-precorrin-6A. The chain is Cobalt-precorrin-5B C(1)-methyltransferase from Geobacter metallireducens (strain ATCC 53774 / DSM 7210 / GS-15).